Reading from the N-terminus, the 225-residue chain is Enolase-phosphatase E1 (225 aa).

The protein belongs to the HAD-like hydrolase superfamily. MasA/MtnC family. As to quaternary structure, monomer. It depends on Mg(2+) as a cofactor.

It carries out the reaction 5-methylsulfanyl-2,3-dioxopentyl phosphate + H2O = 1,2-dihydroxy-5-(methylsulfanyl)pent-1-en-3-one + phosphate. It functions in the pathway amino-acid biosynthesis; L-methionine biosynthesis via salvage pathway; L-methionine from S-methyl-5-thio-alpha-D-ribose 1-phosphate: step 3/6. It participates in amino-acid biosynthesis; L-methionine biosynthesis via salvage pathway; L-methionine from S-methyl-5-thio-alpha-D-ribose 1-phosphate: step 4/6. Bifunctional enzyme that catalyzes the enolization of 2,3-diketo-5-methylthiopentyl-1-phosphate (DK-MTP-1-P) into the intermediate 2-hydroxy-3-keto-5-methylthiopentenyl-1-phosphate (HK-MTPenyl-1-P), which is then dephosphorylated to form the acireductone 1,2-dihydroxy-3-keto-5-methylthiopentene (DHK-MTPene). The sequence is that of Enolase-phosphatase E1 from Shewanella loihica (strain ATCC BAA-1088 / PV-4).